Reading from the N-terminus, the 176-residue chain is Putative phosphohydrolase YueE (176 aa).

The 117-residue stretch at 23–139 (GVAHAIACAY…VKKADELDEE (117 aa)) folds into the HD domain.

The polypeptide is Putative phosphohydrolase YueE (yueE) (Bacillus subtilis (strain 168)).